The primary structure comprises 257 residues: Imidazole glycerol phosphate synthase subunit HisF (257 aa).

Residues Asp-11 and Asp-130 contribute to the active site.

This sequence belongs to the HisA/HisF family. As to quaternary structure, heterodimer of HisH and HisF.

Its subcellular location is the cytoplasm. It carries out the reaction 5-[(5-phospho-1-deoxy-D-ribulos-1-ylimino)methylamino]-1-(5-phospho-beta-D-ribosyl)imidazole-4-carboxamide + L-glutamine = D-erythro-1-(imidazol-4-yl)glycerol 3-phosphate + 5-amino-1-(5-phospho-beta-D-ribosyl)imidazole-4-carboxamide + L-glutamate + H(+). The protein operates within amino-acid biosynthesis; L-histidine biosynthesis; L-histidine from 5-phospho-alpha-D-ribose 1-diphosphate: step 5/9. In terms of biological role, IGPS catalyzes the conversion of PRFAR and glutamine to IGP, AICAR and glutamate. The HisF subunit catalyzes the cyclization activity that produces IGP and AICAR from PRFAR using the ammonia provided by the HisH subunit. The sequence is that of Imidazole glycerol phosphate synthase subunit HisF from Afipia carboxidovorans (strain ATCC 49405 / DSM 1227 / KCTC 32145 / OM5) (Oligotropha carboxidovorans).